Here is a 146-residue protein sequence, read N- to C-terminus: Hemoglobin subunit beta (146 aa).

The region spanning 2–146 is the Globin domain; that stretch reads HWSAEEKQLI…VAHALARKYH (145 aa). Heme b is bound by residues His-63 and His-92.

The protein belongs to the globin family. Heterotetramer of two alpha chains and two beta chains. As to expression, red blood cells.

In terms of biological role, involved in oxygen transport from the lung to the various peripheral tissues. This chain is Hemoglobin subunit beta (HBB), found in Eudyptes chrysocome (Western rockhopper penguin).